An 883-amino-acid chain; its full sequence is MNEQYSALRSNVSMLGKVLGDTIKDALGETILDRVETIRKLSKSSRAGNEANRQELLTTLQNLSNDELLPVARAFSQFLNLANTAEQYHSISPKGEGASNPEVIARTLRKLKDQPELNEETIKKAVESLSLELVLTAHPTEITRRTLIHKMGEVNSCLKQLDNKDIVDYERNQLMRRLRQLIAQSWHTDEIRKYRPSPVDEAKWGFAVVENSLWEGVPNYLRELNEQLEENLGYRLPVDFVPVRFTSWMGGDRDGNPNVTAEITRHVLLLSRWKATDLFLKDIQILISELSMVEATPELLELVGEAGATEPYRFLLKGLRGQLMATQAWLEARLKGQRLPKPAGLLSQNEQLWDPLYACYKSLQACGMGIIANGELLDTLRRVKCFGVPLVRIDVRQESTRHTEALGELTRYLGIGDYESWSEADKQAFLIRELNSKRPLLPRSWEPSEETSEVLNTCKAIVDAPKGSVAAYVISMAKTPSDVLAVHLLLKEAGISFALPVAPLFETLDDLNNANDVMTQLLNIDWYRGFIQGKQMVMIGYSDSAKDAGVMAASWAQYQAQDALIKTCEKAGIELTLFHGRGGSIGRGGAPAHAALLSQPPGSLKGGLRVTEQGEMIRFKYGLPEVTISSLSLYTSAILEANLLPPPEPKDAWRHIMDELSDISCDLYRGYVRENKDFVPYFRSATPEQELGKLPLGSRPAKRRPTGGVESLRAIPWIFAWTQNRLMLPAWLGAGAALQKVVEDGKQTELETMCRDWPFFSTRLGMLEMVFSKVDLWLAEYYDQRLVKPELWALGKELRELLEGDIKIVLAIANDSHLMADLPWIAESIQLRNIYTDPLNVLQAELLHRSRKAEEEGKEADPRVEQALMVTIAGVAAGMRNTG.

Residues His138 and Lys546 contribute to the active site.

This sequence belongs to the PEPCase type 1 family. Requires Mg(2+) as cofactor.

The enzyme catalyses oxaloacetate + phosphate = phosphoenolpyruvate + hydrogencarbonate. Functionally, forms oxaloacetate, a four-carbon dicarboxylic acid source for the tricarboxylic acid cycle. This is Phosphoenolpyruvate carboxylase from Enterobacter sp. (strain 638).